A 333-amino-acid polypeptide reads, in one-letter code: uncharacterized protein (333 aa).

To E.coli YfeH.

This is an uncharacterized protein from Pseudomonas aeruginosa (strain ATCC 15692 / DSM 22644 / CIP 104116 / JCM 14847 / LMG 12228 / 1C / PRS 101 / PAO1).